Here is a 309-residue protein sequence, read N- to C-terminus: UDP-N-acetylenolpyruvoylglucosamine reductase (309 aa).

In terms of domain architecture, FAD-binding PCMH-type spans 34 to 221 (RVGGPAQVLF…TAAREAAQPI (188 aa)). Arg179 is a catalytic residue. Ser228 (proton donor) is an active-site residue. Residue Glu298 is part of the active site.

It belongs to the MurB family. The cofactor is FAD.

The protein resides in the cytoplasm. The enzyme catalyses UDP-N-acetyl-alpha-D-muramate + NADP(+) = UDP-N-acetyl-3-O-(1-carboxyvinyl)-alpha-D-glucosamine + NADPH + H(+). It functions in the pathway cell wall biogenesis; peptidoglycan biosynthesis. Functionally, cell wall formation. This Methylorubrum populi (strain ATCC BAA-705 / NCIMB 13946 / BJ001) (Methylobacterium populi) protein is UDP-N-acetylenolpyruvoylglucosamine reductase.